The sequence spans 345 residues: uncharacterized protein (345 aa).

3 Solcar repeats span residues 80 to 153 (MSFF…MKSR), 162 to 246 (SDPQ…LKLK), and 256 to 339 (NLAH…ILNF). A run of 6 helical transmembrane segments spans residues 83 to 103 (FEAL…LFPI), 128 to 148 (GLGS…TTYE), 220 to 240 (AGYG…FPIW), 262 to 282 (AISG…FDVV), 296 to 316 (VFTI…KGIV), and 319 to 339 (VLWL…ILNF).

This sequence belongs to the mitochondrial carrier (TC 2.A.29) family.

The protein resides in the mitochondrion inner membrane. This is an uncharacterized protein from Schizosaccharomyces pombe (strain 972 / ATCC 24843) (Fission yeast).